A 263-amino-acid chain; its full sequence is Phosphate import ATP-binding protein PstB (263 aa).

In terms of domain architecture, ABC transporter spans 17-258 (IDVRDLNFYY…PRRKETEDYI (242 aa)). 49-56 (GPSGCGKS) is an ATP binding site.

This sequence belongs to the ABC transporter superfamily. Phosphate importer (TC 3.A.1.7) family. In terms of assembly, the complex is composed of two ATP-binding proteins (PstB), two transmembrane proteins (PstC and PstA) and a solute-binding protein (PstS).

It localises to the cell inner membrane. It catalyses the reaction phosphate(out) + ATP + H2O = ADP + 2 phosphate(in) + H(+). Functionally, part of the ABC transporter complex PstSACB involved in phosphate import. Responsible for energy coupling to the transport system. The chain is Phosphate import ATP-binding protein PstB from Ralstonia nicotianae (strain ATCC BAA-1114 / GMI1000) (Ralstonia solanacearum).